A 505-amino-acid polypeptide reads, in one-letter code: Phosphoglycerate kinase, glycosomal (505 aa).

13 residues coordinate (2R)-3-phosphoglycerate: Val29, Asp30, Phe31, Asn32, Arg45, Ser67, His68, Gly70, Arg71, Leu219, Arg220, His256, and Arg257. 2 residues coordinate ADP: Gly302 and Ala303. Gly302 contacts CDP. AMP is bound by residues Ala303 and Lys304. Ala303 is an ATP binding site. Residue Ala303 participates in Mg(2+) binding. Lys304 is a (2R)-3-phosphoglycerate binding site. Asp307 is a binding site for CDP. Asp307 contacts Mg(2+). ADP-binding residues include Lys308 and Gly326. Lys308 serves as a coordination point for AMP. Residue Lys308 participates in ATP binding. Gly326 lines the CDP pocket. Residues Gly327 and Gly399 each coordinate AMP. ATP contacts are provided by Gly327 and Gly399. 2 residues coordinate ADP: Gly399 and Asn423. The CDP site is built by Gly424, Leu426, and Phe429. The ADP site is built by Phe429, Glu430, Asp462, and Thr463. Glu430 contacts AMP. 3 residues coordinate ATP: Glu430, Asp462, and Thr463. Position 462 (Asp462) interacts with Mg(2+).

This sequence belongs to the phosphoglycerate kinase family. In terms of assembly, monomer. It depends on Mg(2+) as a cofactor.

It localises to the glycosome. It carries out the reaction (2R)-3-phosphoglycerate + ATP = (2R)-3-phospho-glyceroyl phosphate + ADP. It participates in carbohydrate degradation; glycolysis; pyruvate from D-glyceraldehyde 3-phosphate: step 2/5. The polypeptide is Phosphoglycerate kinase, glycosomal (PGKA) (Crithidia fasciculata).